We begin with the raw amino-acid sequence, 721 residues long: Catalase-peroxidase 1 (721 aa).

The segment at residues 98-226 is a cross-link (tryptophyl-tyrosyl-methioninium (Trp-Tyr) (with M-252)); it reads WHAAGTYRIA…LAAVMMGLIY (129 aa). His-99 acts as the Proton acceptor in catalysis. Residues 226–252 constitute a cross-link (tryptophyl-tyrosyl-methioninium (Tyr-Met) (with W-98)); that stretch reads YVNPEGVDGQPDPLKTAHDVRVTFARM. Residue His-267 participates in heme b binding.

This sequence belongs to the peroxidase family. Peroxidase/catalase subfamily. In terms of assembly, homodimer or homotetramer. Heme b is required as a cofactor. In terms of processing, formation of the three residue Trp-Tyr-Met cross-link is important for the catalase, but not the peroxidase activity of the enzyme.

It carries out the reaction H2O2 + AH2 = A + 2 H2O. It catalyses the reaction 2 H2O2 = O2 + 2 H2O. In terms of biological role, bifunctional enzyme with both catalase and broad-spectrum peroxidase activity. The polypeptide is Catalase-peroxidase 1 (Vibrio parahaemolyticus serotype O3:K6 (strain RIMD 2210633)).